The primary structure comprises 476 residues: Probable serine carboxypeptidase CPVL (476 aa).

Positions 1–22 (MVGAMWKVIVSLVLLMPGPCDG) are cleaved as a signal peptide. 2 N-linked (GlcNAc...) asparagine glycosylation sites follow: Asn-81 and Asn-132. Ser-204 is a catalytic residue. N-linked (GlcNAc...) asparagine glycans are attached at residues Asn-307 and Asn-346. Residues Asp-388 and His-448 contribute to the active site.

It belongs to the peptidase S10 family. Expressed in macrophages but not in other leukocytes. Abundantly expressed in heart and kidney. Also expressed in spleen, leukocytes, and placenta.

Functionally, may be involved in the digestion of phagocytosed particles in the lysosome, participation in an inflammatory protease cascade, and trimming of peptides for antigen presentation. This chain is Probable serine carboxypeptidase CPVL (CPVL), found in Homo sapiens (Human).